The primary structure comprises 267 residues: O-methyltransferase (267 aa).

2 residues coordinate S-adenosyl-L-methionine: Gln-100 and His-145.

This sequence belongs to the methyltransferase superfamily.

It participates in antifungal biosynthesis. O-methyltransferase; part of the gene cluster that mediates the biosynthesis of the tetrahydropyranyl antifungal agent lanomycin that acts as an inhibitor of CYP51 and blocks the ergosterol biosynthesis. The biosynthesis probably begins with the formation of an hexaketide, followed by methionine mediated alkylation of C-2 and C-6, and methylation of the reduced C-3 oxygen, pyran forming reductive ring closure, oxygenation of C-4, beta-keto reduction, enoyl reduction and dehydration of the remaining oxygens, and finally, acylation with glycine to complete the biosynthesis. The polypeptide is O-methyltransferase (Pyrenophora dematioidea (Helminthosporium dematioideum)).